A 409-amino-acid chain; its full sequence is DEP domain-containing mTOR-interacting protein (409 aa).

Met-1 is modified (N-acetylmethionine). The interval 1-25 is disordered; sequence MEEGGSTGSAGSDSSTSGSGGAQQR. DEP domains follow at residues 36–119 and 145–219; these read TGEQ…RFRK and SPEN…QFRM. Residues 217–235 carry the DDEX motif motif; that stretch reads FRMNFRRRRRLMELLNEKS. At Ser-235 the chain carries Phosphoserine; by MAPK3. Phosphothreonine is present on Thr-241. Phosphoserine is present on residues Ser-244 and Ser-258. Thr-259 carries the phosphothreonine modification. Residues Ser-263, Ser-265, Ser-280, Ser-282, and Ser-283 each carry the phosphoserine modification. Phosphoserine; by CK1 occurs at positions 286 and 287. The BetaTrCP degron motif signature appears at 286-291; sequence SSGYFS. Tyr-289 is modified (phosphotyrosine; by SYK). Position 291 is a phosphoserine; by CK1 (Ser-291). Phosphoserine; by MTOR is present on Ser-293. The residue at position 295 (Thr-295) is a Phosphothreonine; by MTOR. 2 positions are modified to phosphoserine: Ser-297 and Ser-298. The residue at position 299 (Ser-299) is a Phosphoserine; by MTOR. In terms of domain architecture, PDZ spans 330–407; it reads TFTIVGDAVG…TIVMEVMEEL (78 aa).

Associated component of the mechanistic target of rapamycin complex 1 (mTORC1) which contains MTOR, MLST8 and RPTOR. Associated component of the mechanistic target of rapamycin complex 2 (mTORC2) which contains MTOR, MLST8, PROTOR1, RICTOR, MAPKAP1 and DEPTOR. Interacts (via PDZ domain) with MTOR; interacts with MTOR within both mTORC1 and mTORC2. Interacts (via PDZ domain) with MINAR1 (via N-terminus). Interacts with SIK3. In terms of processing, phosphorylation weakens interaction with MTOR within mTORC1 and mTORC2. Phosphorylated at Ser-286, Ser-287 and Ser-291 in response to mitogenic stimulation by MTOR: DEPTOR is either directly phosphorylated by MTOR or indirectly via proteins kinases that are activated by MTOR, such as CK1/CSNK1A1. Phosphorylation at Ser-286, Ser-287 and Ser-291 promotes ubiquitination by the SCF(BTRC) complex, followed by degradation. Phosphorylation at Ser-235 by MAPK3/ERK1 promotes deubiquitination by USP7, enhancing its stability. Phosphorylation at Tyr-289 by SYK impairs its interaction with MTOR, promoting mTORC1 and mTORC2 signaling. Ubiquitinated; leading to proteasomal degradation. Ubiquitination by the SCF(BTRC) and SCF(FBXW11) complexes following phosphorylation at Ser-286, Ser-287 and Ser-291 by MTOR, leads to its degradation by the proteasome. Deubiquitinated by OTUB1 in response to amino acid via a non-canonical mechanism, leading to DEPTOR stability. Deubiquitinated by USP7 following phosphorylation at Ser-235, promoting its stability.

It localises to the lysosome membrane. With respect to regulation, inhibited upon phosphatidic acid-binding: phosphatidic acid produced upon mitogenic stimulation promotes DEPTOR dissociatiom from the mTORC1 and mTORC2 complexes, leading to their activation. Specifically binds unsaturated phosphatidic acid, such as 16:0-18:1, 18:0-18:1 and di-18:1. Inhibited when nutrients are present via a feedback loop: phosphorylation by MTOR promotes DEPTOR ubiquitination and degradation. In terms of biological role, negative regulator of the mTORC1 and mTORC2 complexes: inhibits the protein kinase activity of MTOR, thereby inactivating both complexes. DEPTOR inhibits mTORC1 and mTORC2 to induce autophagy. In contrast to AKT1S1/PRAS40, only partially inhibits mTORC1 activity. This Homo sapiens (Human) protein is DEP domain-containing mTOR-interacting protein.